A 673-amino-acid polypeptide reads, in one-letter code: Ribonucleoprotein PTB-binding 2 (673 aa).

Over residues 1 to 17 (MAARGGGAGGAGSGSGP) the composition is skewed to gly residues. Positions 1–34 (MAARGGGAGGAGSGSGPSAGTAGEAAEPALRPGE) are disordered. A compositionally biased stretch (low complexity) spans 18–29 (SAGTAGEAAEPA). RRM domains lie at 58 to 129 (RKIL…LQPT), 131 to 209 (ALLC…WMDV), and 220 to 298 (KCLC…FCAP). The interval 481 to 549 (QLPAGQAGPG…KGTEVASKNQ (69 aa)) is disordered. Positions 499-512 (SASVSISEASFSGS) are enriched in low complexity. The segment covering 529–549 (TGNQKTPQSQPKGTEVASKNQ) has biased composition (polar residues).

As to quaternary structure, interacts with PTBP1 and RAVER1. Expressed throughout embryogenesis. Detected at low levels in adult lung, brain and kidney, but not in the other tissues tested.

It is found in the nucleus. Its subcellular location is the cytoplasm. Its function is as follows. May bind single-stranded nucleic acids. The sequence is that of Ribonucleoprotein PTB-binding 2 (Raver2) from Mus musculus (Mouse).